Consider the following 473-residue polypeptide: MSMKISEKKFNDRVGDGIQDSFMRGAVTSAQTRLYTNRLKAADELGNWEEWRELGEQIRQHTLENLDYYLMQLSENVSKRGGNVFFAKTKEEAANYIQEVAKKKNAKKVVKSKSMVTEEISMNHALEEIGCEVVESDLGEYILQVDNDPPSHIVAPALHKNKTQIRDVFKEKLGYENSDDPYEMTKFVRKHLRKKFMDAEIGITGCNFAVANTGSLCLVTNEGNADLVMSIPKTQIAVMGMERMVPTMEELDVLVGLLCRSAVGQKLTSYVTVAGPIQEEEIDGPEEFHLVIVDNGRSEILGSEFRQVLQCIRCAACINVCPVYRHVGGHSYGSIYPGPIGAVLSPLLGGYDDYKELPYASSLCGACTEACPVKIPLHDLLLKHRQVIVEKEGRAPLAEKLAMKMFSMGASSAALYKIGSKMAPVALSPFTSGNRVTKGVGPLKNWTEIREFPAPSKERFRDWYKEHKKGGDK.

4Fe-4S ferredoxin-type domains are found at residues G302–Y332 and Y351–L380. Positions 311, 314, 317, 321, 364, 367, and 371 each coordinate [4Fe-4S] cluster.

It belongs to the LutB/YkgF family.

In terms of biological role, is involved in L-lactate degradation and allows cells to grow with lactate as the sole carbon source. Has probably a role as an electron transporter during oxidation of L-lactate. The sequence is that of Lactate utilization protein B from Bacillus cytotoxicus (strain DSM 22905 / CIP 110041 / 391-98 / NVH 391-98).